Consider the following 178-residue polypeptide: uncharacterized protein (178 aa).

This is an uncharacterized protein from Cestrum parqui (CmYLCV).